Consider the following 253-residue polypeptide: Probable transcriptional regulatory protein slr0989 (253 aa).

Residues 1 to 22 are disordered; it reads MGGRKWQSIKRQKARVDAQKGK.

The protein belongs to the TACO1 family.

Its subcellular location is the cytoplasm. The polypeptide is Probable transcriptional regulatory protein slr0989 (Synechocystis sp. (strain ATCC 27184 / PCC 6803 / Kazusa)).